The following is a 605-amino-acid chain: F-box/WD repeat-containing protein 1A (605 aa).

Residues 128-177 form a homodimerization domain D region; that stretch reads ASYEKEKELCVKYFEQWSESDQVEFVEHLISQMCHYQHGHINSYLKPMLQ. Residues 182 to 228 enclose the F-box domain; the sequence is TALPARGLDHIAENILSYLDAKSLCAAELVCKEWYRVTSDGMLWKKL. The required for down-regulation of SNAI1 stretch occupies residues 190–228; that stretch reads DHIAENILSYLDAKSLCAAELVCKEWYRVTSDGMLWKKL. WD repeat units lie at residues 301–338, 341–378, 381–418, 424–461, 464–503, 505–541, and 553–590; these read ETSK…CKRI, GHTG…MLNT, HHCE…DITL, GHRA…FVRT, GHKR…RVLE, HEEL…DPRA, and EHSG…AAHA.

In terms of assembly, homodimer. Self-associates. Component of the SCF(BTRC) complex, composed of SKP1, CUL1 and BTRC. Direct interaction with SKP1 with SKP1 occurs via the F-box domain. Interacts with phosphorylated ubiquitination substrates SMAD3 and SMAD4. Interacts with phosphorylated ubiquitination substrates CTNNB1, NFKBIA, NFKBIB, NFKBIE, NFKB1/nuclear factor NF-kappa-B p105 subunit, ATF4, CDC25A, DLG1, FBXO5 and SNAI1; the interaction requires the phosphorylation of the 2 serine residues in the substrate destruction motif D-S-G-X(2,3,4)-S. Binds UBQLN1. Interacts with CDC34 and UBE2R2. Interacts with FBXW11. Interacts with CUL4A and DDB1. Part of a SCF(BTRC)-like complex lacking CUL1, which is associated with phosphorylated NKBIA and RELA; RELA interacts directly with NFKBIA. Interacts with the phosphorylated form of GLI3. Interacts with CLU. Interacts with PER1 (phosphorylated), PER2 (phosphorylated) and PER3. Interacts with phosphorylated ubiquitination substrate CEP68. Interacts with ZC3H12A; this interaction occurs when ZC3H12A is phosphorylated in a IKBKB/IKKB-dependent manner. Interacts with HSF1; this interaction occurs during mitosis and induces HSF1 ubiquitin-dependent degradation, a process inhibited by CDC20. Interacts with NFE2L1. Interacts with INAVA. Interacts with IL10RA; this interaction leads to IL10RA ubiquitination and subsequent degradation. Interacts with REST. Interacts with KLF4; this interaction leads to KLF4 ubiquitination and subsequent degradation. Interacts with UBR2, as part of a SCF(BTRC) complex; the interaction mediates 'Lys-48'-linked ubiquitination of UBR2 and is regulated by DUSP22 in the T-cell receptor signaling pathway. Ubiquitinated via 'Lys-11'-linked polyubiquitin by some cullin-5-RING E3 ubiquitin-protein ligase complex (ECS complex), leading to its degradation. Deubiquitinated by OTUD5, promoting its stability. In terms of tissue distribution, expressed in heart, brain, liver, skeletal muscle and, most strongly, in testis.

Its subcellular location is the cytoplasm. It localises to the nucleus. It functions in the pathway protein modification; protein ubiquitination. Substrate recognition component of a SCF (SKP1-CUL1-F-box protein) E3 ubiquitin-protein ligase complex which mediates the ubiquitination and subsequent proteasomal degradation of target proteins. Recognizes and binds to phosphorylated target proteins. SCF(BTRC) mediates the ubiquitination of phosphorylated NFKB, ATF4, CDC25A, DLG1, FBXO5, PER1, SMAD3, SMAD4, SNAI1 and probably NFKB2. SCF(BTRC) mediates the ubiquitination of CTNNB1 and participates in Wnt signaling. SCF(BTRC) mediates the ubiquitination of NFKBIA, NFKBIB and NFKBIE; the degradation frees the associated NFKB1 to translocate into the nucleus and to activate transcription. Ubiquitination of NFKBIA occurs at 'Lys-21' and 'Lys-22'. The SCF(FBXW11) complex also regulates NF-kappa-B by mediating ubiquitination of phosphorylated NFKB1: specifically ubiquitinates the p105 form of NFKB1, leading to its degradation. SCF(BTRC) mediates the ubiquitination of CEP68; this is required for centriole separation during mitosis. SCF(BTRC) mediates the ubiquitination and subsequent degradation of nuclear NFE2L1. Has an essential role in the control of the clock-dependent transcription via degradation of phosphorylated PER1 and PER2. May be involved in ubiquitination and subsequent proteasomal degradation through a DBB1-CUL4 E3 ubiquitin-protein ligase. Required for activation of NFKB-mediated transcription by IL1B, MAP3K14, MAP3K1, IKBKB and TNF. Required for proteolytic processing of GLI3. Mediates ubiquitination of REST, thereby leading to its proteasomal degradation. SCF(BTRC) mediates the ubiquitination and subsequent proteasomal degradation of KLF4; thereby negatively regulating cell pluripotency maintenance and embryogenesis. SCF(BTRC) acts as a regulator of mTORC1 signaling pathway by catalyzing ubiquitination and subsequent proteasomal degradation of phosphorylated DEPTOR, TFE3 and MITF. SCF(BTRC) directs 'Lys-48'-linked ubiquitination of UBR2 in the T-cell receptor signaling pathway. This chain is F-box/WD repeat-containing protein 1A, found in Mus musculus (Mouse).